A 292-amino-acid polypeptide reads, in one-letter code: DSC E3 ubiquitin ligase complex subunit 3 (292 aa).

The Extracellular segment spans residues 1–243; the sequence is MSAEPLLPTH…PIANIKHNKD (243 aa). N-linked (GlcNAc...) asparagine glycans are attached at residues Asn11, Asn41, Asn77, Asn99, and Asn145. The chain crosses the membrane as a helical span at residues 244-264; it reads LLLGICVGFFFGVFGILLMKF. At 265-273 the chain is on the cytoplasmic side; that stretch reads DGLFNRRQK. Residues 274–291 traverse the membrane as a helical segment; it reads MAIFAGVIVNVMFCLVRG. Position 292 (Phe292) is a topological domain, extracellular.

The protein belongs to the dsc3 family. In terms of assembly, component of the DSC E3 ligase complexes composed of at least TUL1, DSC2, DSC3, UBX3, CDC48 as well as VLD1 for the vacuole-localized complex or GLD1 for the Golgi/endosome-localized complex.

It is found in the endoplasmic reticulum membrane. Component of the DSC E3 ubiquitin ligase complexes that tag proteins present in Golgi, endosome and vacuole membranes and function in protein homeostasis under non-stress conditions and support a role in protein quality control. Involved in endocytic protein trafficking. The polypeptide is DSC E3 ubiquitin ligase complex subunit 3 (Saccharomyces cerevisiae (strain ATCC 204508 / S288c) (Baker's yeast)).